The sequence spans 121 residues: Large ribosomal subunit protein uL14 (121 aa).

It belongs to the universal ribosomal protein uL14 family. In terms of assembly, part of the 50S ribosomal subunit. Forms a cluster with proteins L3 and L19. In the 70S ribosome, L14 and L19 interact and together make contacts with the 16S rRNA in bridges B5 and B8.

Functionally, binds to 23S rRNA. Forms part of two intersubunit bridges in the 70S ribosome. The sequence is that of Large ribosomal subunit protein uL14 from Synechococcus sp. (strain CC9605).